The chain runs to 419 residues: Subtilisin-like protease 2 (419 aa).

An N-terminal signal peptide occupies residues 1–16 (MQLLNFGLLLLPFVAG). A propeptide spanning residues 17–122 (DLAPQPEPLL…VHPDQHVYLA (106 aa)) is cleaved from the precursor. The Inhibitor I9 domain occupies 36–122 (QYIVTLKEGL…VHPDQHVYLA (87 aa)). A Peptidase S8 domain is found at 131–419 (RWGLGYMSSK…IQERKFKLPK (289 aa)). Catalysis depends on charge relay system residues aspartate 169 and histidine 201. Residues asparagine 248, asparagine 261, and asparagine 348 are each glycosylated (N-linked (GlcNAc...) asparagine). Residue serine 357 is the Charge relay system of the active site. N-linked (GlcNAc...) asparagine glycosylation occurs at asparagine 388.

Belongs to the peptidase S8 family.

It is found in the secreted. Its function is as follows. Secreted subtilisin-like serine protease with keratinolytic activity that contributes to pathogenicity. The polypeptide is Subtilisin-like protease 2 (SUB2) (Trichophyton verrucosum (Cattle ringworm fungus)).